The chain runs to 708 residues: ATP-dependent RNA helicase laf-1 (708 aa).

The span at 1–21 (MESNQSNNGGSGNAALNRGGR) shows a compositional bias: low complexity. The tract at residues 1–191 (MESNQSNNGG…RGTSKWENRG (191 aa)) is disordered. Positions 48 to 70 (GAGGGGYRRGGGNSGGGGGGGYD) are enriched in gly residues. Composition is skewed to basic and acidic residues over residues 72-83 (GYNDNRDDRDNR) and 90-99 (GRDRNYEDRG). Residues 100–123 (YNGGGGGGGNRGYNNNRGGGGGGY) are compositionally biased toward gly residues. A Q motif motif is present at residues 231-259 (SLFSDLSLHEWIEENIKTAGYDRPTPVQK). The 192-residue stretch at 262-453 (IPALQGGRDL…QDFLKENYVF (192 aa)) folds into the Helicase ATP-binding domain. Position 275–282 (275–282 (AQTGSGKT)) interacts with ATP. The short motif at 397 to 400 (DEAD) is the DEAD box element. The region spanning 465-626 (NIMQKIVWVE…ELPDWLEGMS (162 aa)) is the Helicase C-terminal domain. Positions 623-708 (EGMSGDMRSG…RAQPQQDWWS (86 aa)) are disordered. Composition is skewed to gly residues over residues 630 to 647 (RSGG…GQRF) and 656 to 692 (GGSG…GGGR). A compositionally biased stretch (polar residues) spans 699–708 (RAQPQQDWWS).

This sequence belongs to the DEAD box helicase family. DDX3/DED1 subfamily. In terms of assembly, binds RNA as a monomer at low laf-1 concentrations and as a dimer at high laf-1 concentrations. In terms of tissue distribution, expressed in the germline and soma of young adult hermaphrodites.

Its subcellular location is the cytoplasm. The protein resides in the cytoplasmic granule. The protein localises to the nucleus. It is found in the stress granule. It localises to the inflammasome. Its subcellular location is the cell membrane. The protein resides in the cell projection. The protein localises to the lamellipodium. It carries out the reaction ATP + H2O = ADP + phosphate + H(+). Multifunctional ATP-dependent RNA helicase. Plays a role in RNA remodeling, but is not required for RNA unwinding. Binds to RNA in a concentration-dependent manner to stimulate annealing between two complementary strands of RNA. This process is also dependent upon ATP; ATP reduces binding to RNA and subsequently diminishes RNA annealing. Involved in many cellular processes, which do not necessarily require its ATPase/helicase catalytic activities. Involved in the regulation of transcription and translation initiation. Involved in innate immunity. Involved in both stress and inflammatory responses. Promotes liquid-liquid phase separation of P granules, which is a process important for intracellular organization and stress granule assembly. Required for embryonic development. Plays a role in sexual cell fate determination by negatively regulating the translation of the sex determining protein tra-2. May play a protective role in the response to heat and oxidative stress. May negatively regulate extrinsic apoptotic signaling pathway via death domain receptors. May be involved in mitotic chromosome segregation. The protein is ATP-dependent RNA helicase laf-1 of Caenorhabditis elegans.